The chain runs to 515 residues: Maturase K (515 aa).

It belongs to the intron maturase 2 family. MatK subfamily.

It is found in the plastid. The protein resides in the chloroplast. Its function is as follows. Usually encoded in the trnK tRNA gene intron. Probably assists in splicing its own and other chloroplast group II introns. This is Maturase K from Pinus elliottii (Slash pine).